The following is a 462-amino-acid chain: Coagulation factor IX (462 aa).

The N-terminal stretch at 1–21 (MADAPGLIPIFLLGYLLSTEC) is a signal peptide. Residues 22-39 (AVFLDRENATKILTRPKR) constitute a propeptide that is removed on maturation. Positions 40, 41, 46, 47, 54, 56, 59, 60, 65, 66, and 69 each coordinate Ca(2+). Residues 40–86 (YNSGKLEEFVQGNLERECIEERCSFEEAREVFENTEKTTEFWKQYVD) form the Gla domain. 4-carboxyglutamate is present on residues Glu46, Glu47, Glu54, Glu56, Glu59, Glu60, Glu65, Glu66, Glu69, Glu72, and Glu75. Glu54 lines the Mg(2+) pocket. A disulfide bridge connects residues Cys57 and Cys62. Position 59 (Glu59) interacts with Mg(2+). Glu65 is a binding site for Mg(2+). Glu69 is a binding site for Mg(2+). Residue Glu75 coordinates Ca(2+). Glu75 contacts Mg(2+). An O-linked (GalNAc...) threonine glycan is attached at Thr78. 4 residues coordinate Ca(2+): Glu79, Asp86, Gly87, and Gln89. A 4-carboxyglutamate modification is found at Glu79. Glu79 provides a ligand contact to Mg(2+). The EGF-like; calcium-binding domain maps to 86-122 (DGDQCESNPCLNGGICKDDINSYECWCQAGFEGRNCE). 10 disulfides stabilise this stretch: Cys90/Cys101, Cys95/Cys110, Cys112/Cys121, Cys127/Cys138, Cys134/Cys148, Cys150/Cys163, Cys171/Cys336, Cys253/Cys269, Cys383/Cys397, and Cys408/Cys436. Ser92 carries O-linked (Glc...) serine glycosylation. Positions 103 and 104 each coordinate Ca(2+). (3R)-3-hydroxyaspartate is present on Asp103. Ser107 is modified (phosphoserine). Positions 186 to 227 (AETVFSNTDYGNSTELILDDITNSTILDNLTENSEPINDFTR) are cleaved as a propeptide — activation peptide. At Tyr195 the chain carries Sulfotyrosine. Ser198 is subject to Phosphoserine. The residue at position 199 (Thr199) is a Phosphothreonine; alternate. Thr199 carries O-linked (GalNAc...) threonine; alternate glycosylation. Residues Asn208 and Asn214 are each glycosylated (N-linked (GlcNAc...) asparagine). O-linked (GalNAc...) threonine glycans are attached at residues Thr216 and Thr226. Positions 228-460 (VVGGENAKPG…YVNWIKEKTK (233 aa)) constitute a Peptidase S1 domain. Catalysis depends on His268, which acts as the Charge relay system. Ca(2+) is bound by residues Glu282, Asn284, Glu287, Glu289, and Glu292. An N-linked (GlcNAc...) asparagine glycan is attached at Asn307. Residue Asp316 is the Charge relay system of the active site. Catalysis depends on Ser412, which acts as the Charge relay system.

Belongs to the peptidase S1 family. As to quaternary structure, heterodimer of a light chain and a heavy chain; disulfide-linked. Interacts (inactive and activated) with F11 (activated) in calcium-dependent manner. Interacts with SERPINC1. Interacts (inactive and activated) with nitrophorin-2, an anticoagulant protein from Rhodnius prolixus. In terms of processing, activated by factor XIa, which excises the activation peptide. The propeptide can also be removed by snake venom protease. Activated by coagulation factor VIIa-tissue factor (F7-F3) complex in calcium-dependent manner. The iron and 2-oxoglutarate dependent 3-hydroxylation of aspartate and asparagine is (R) stereospecific within EGF domains. Post-translationally, predominantly O-glucosylated at Ser-92 by POGLUT1 in vitro.

It is found in the secreted. The enzyme catalyses Selective cleavage of Arg-|-Ile bond in factor X to form factor Xa.. Its function is as follows. Factor IX is a vitamin K-dependent plasma protein that participates in the intrinsic pathway of blood coagulation by converting factor X to its active form in the presence of Ca(2+) ions, phospholipids, and factor VIIIa. This Rattus norvegicus (Rat) protein is Coagulation factor IX (F9).